The sequence spans 476 residues: Lactate utilization protein B (476 aa).

4Fe-4S ferredoxin-type domains are found at residues 304–334 and 353–382; these read GTEF…GHSY and YDDY…LHEL. [4Fe-4S] cluster is bound by residues Cys313, Cys316, Cys319, Cys323, Cys366, Cys369, and Cys373.

This sequence belongs to the LutB/YkgF family.

Its function is as follows. Is involved in L-lactate degradation and allows cells to grow with lactate as the sole carbon source. Has probably a role as an electron transporter during oxidation of L-lactate. The protein is Lactate utilization protein B of Geobacillus thermodenitrificans (strain NG80-2).